Consider the following 116-residue polypeptide: Large ribosomal subunit protein bL17 (116 aa).

This sequence belongs to the bacterial ribosomal protein bL17 family. Part of the 50S ribosomal subunit. Contacts protein L32.

The protein is Large ribosomal subunit protein bL17 of Synechococcus sp. (strain RCC307).